Consider the following 518-residue polypeptide: Probable bifunctional methylthioribulose-1-phosphate dehydratase/enolase-phosphatase E1 (518 aa).

The methylthioribulose-1-phosphate dehydratase stretch occupies residues 1 to 242 (MACCGGGRGE…AIKLYQLGID (242 aa)). Position 114 (cysteine 114) interacts with substrate. Residues histidine 132 and histidine 134 each contribute to the Zn(2+) site. Catalysis depends on glutamate 157, which acts as the Proton donor/acceptor; for methylthioribulose-1-phosphate dehydratase activity. Histidine 207 is a binding site for Zn(2+). Positions 279 to 518 (VVLDIEGTTT…FRTIKSFSEI (240 aa)) are enolase-phosphatase E1. Residues aspartate 282 and glutamate 284 each coordinate Mg(2+). Residues 417-418 (SS) and lysine 451 each bind substrate. Aspartate 477 is a binding site for Mg(2+).

The protein in the N-terminal section; belongs to the aldolase class II family. MtnB subfamily. This sequence in the C-terminal section; belongs to the HAD-like hydrolase superfamily. MasA/MtnC family. Requires Zn(2+) as cofactor. Mg(2+) is required as a cofactor.

It carries out the reaction 5-(methylsulfanyl)-D-ribulose 1-phosphate = 5-methylsulfanyl-2,3-dioxopentyl phosphate + H2O. It catalyses the reaction 5-methylsulfanyl-2,3-dioxopentyl phosphate + H2O = 1,2-dihydroxy-5-(methylsulfanyl)pent-1-en-3-one + phosphate. It participates in amino-acid biosynthesis; L-methionine biosynthesis via salvage pathway; L-methionine from S-methyl-5-thio-alpha-D-ribose 1-phosphate: step 2/6. It functions in the pathway amino-acid biosynthesis; L-methionine biosynthesis via salvage pathway; L-methionine from S-methyl-5-thio-alpha-D-ribose 1-phosphate: step 3/6. The protein operates within amino-acid biosynthesis; L-methionine biosynthesis via salvage pathway; L-methionine from S-methyl-5-thio-alpha-D-ribose 1-phosphate: step 4/6. The sequence is that of Probable bifunctional methylthioribulose-1-phosphate dehydratase/enolase-phosphatase E1 from Oryza sativa subsp. indica (Rice).